Here is a 252-residue protein sequence, read N- to C-terminus: Cell division protein ZapD (252 aa).

Belongs to the ZapD family. Interacts with FtsZ.

The protein localises to the cytoplasm. Cell division factor that enhances FtsZ-ring assembly. Directly interacts with FtsZ and promotes bundling of FtsZ protofilaments, with a reduction in FtsZ GTPase activity. In Chromobacterium violaceum (strain ATCC 12472 / DSM 30191 / JCM 1249 / CCUG 213 / NBRC 12614 / NCIMB 9131 / NCTC 9757 / MK), this protein is Cell division protein ZapD.